Consider the following 630-residue polypeptide: ATP synthase subunit alpha (630 aa).

Residue 173 to 180 (GDRQTGKT) participates in ATP binding. The tract at residues 592–630 (AGGASTAADEDGAGDDEEEAPAPKAKSKNAKSASKAKEK) is disordered. The span at 599 to 611 (ADEDGAGDDEEEA) shows a compositional bias: acidic residues.

This sequence belongs to the ATPase alpha/beta chains family. In terms of assembly, F-type ATPases have 2 components, CF(1) - the catalytic core - and CF(0) - the membrane proton channel. CF(1) has five subunits: alpha(3), beta(3), gamma(1), delta(1), epsilon(1). CF(0) has three main subunits: a(1), b(2) and c(9-12). The alpha and beta chains form an alternating ring which encloses part of the gamma chain. CF(1) is attached to CF(0) by a central stalk formed by the gamma and epsilon chains, while a peripheral stalk is formed by the delta and b chains.

Its subcellular location is the cell inner membrane. The catalysed reaction is ATP + H2O + 4 H(+)(in) = ADP + phosphate + 5 H(+)(out). Its function is as follows. Produces ATP from ADP in the presence of a proton gradient across the membrane. The alpha chain is a regulatory subunit. The polypeptide is ATP synthase subunit alpha (Sorangium cellulosum (strain So ce56) (Polyangium cellulosum (strain So ce56))).